Reading from the N-terminus, the 439-residue chain is Acyl-lipid (8-3)-desaturase (439 aa).

One can recognise a Cytochrome b5 heme-binding domain in the interval 7-88 (GRSAAREMTA…LPKLDASKVE (82 aa)). The heme site is built by His40 and His66. A helical transmembrane segment spans residues 123-143 (IPHMIYRVVEIVALFALSFWL). A Histidine box-1 motif is present at residues 171-175 (HEMGH). The Histidine box-2 motif lies at 208-213 (HSKHHA). 3 helical membrane passes run 254–274 (AYLFAPVSCLLIGLGWTLYLH), 287–307 (FVWIFARYIGWFSLMGALGYS), and 312–332 (VGMYLCSFGLGCIYIFLQFAV). Residues 376 to 380 (QIEHH) carry the Histidine box-3 motif.

This sequence belongs to the fatty acid desaturase type 1 family. Fe(2+) serves as cofactor.

Its subcellular location is the membrane. It carries out the reaction an (8Z,11Z,14Z)-icosatrienoyl-containing glycerolipid + 2 Fe(II)-[cytochrome b5] + O2 + 2 H(+) = (5Z,8Z,11Z,14Z)-eicosatetraenoyl-containing glycerolipid + 2 Fe(III)-[cytochrome b5] + 2 H2O. The catalysed reaction is an (8Z,11Z,14Z,17Z)-eicosatetraenoyl-containing glycerolipid + 2 Fe(II)-[cytochrome b5] + O2 + 2 H(+) = a (5Z,8Z,11Z,14Z,17Z)-eicosapentaenoyl-containing glycerolipid + 2 Fe(III)-[cytochrome b5] + 2 H2O. In terms of biological role, fatty acid desaturase that introduces a cis double bond at the 5-position in 20-carbon polyunsaturated fatty acids incorporated in a glycerolipid that contain a Delta(8) double bond. This is Acyl-lipid (8-3)-desaturase from Thraustochytrium sp.